The chain runs to 739 residues: Trehalose phosphorylase (739 aa).

Positions 1–26 (MSTPHHQFESKSSTAIRRRLSSSVSS) are excised as a propeptide. The disordered stretch occupies residues 1–28 (MSTPHHQFESKSSTAIRRRLSSSVSSKQ).

Belongs to the glycosyltransferase group 1 family. Glycosyltransferase 4 subfamily. In terms of assembly, homodimer.

The enzyme catalyses alpha,alpha-trehalose + phosphate = alpha-D-glucose + alpha-D-glucose 1-phosphate. Reversibly catalyzes the synthesis and degradation of trehalose from glucose and alpha-D-glucose 1-phosphate. The equilibrium lies in the direction of trehalose synthesis. The polypeptide is Trehalose phosphorylase (Pleurotus pulmonarius (Indian oyster mushroom)).